We begin with the raw amino-acid sequence, 147 residues long: Pathogenesis-related protein PR-4B (147 aa).

A signal peptide spans 1–25 (MERVNNYKLCVALLIMSVMMAMAAA). The Barwin domain occupies 26-147 (QSATNVRSTY…VNYEFVNCND (122 aa)). 3 disulfides stabilise this stretch: Cys-54–Cys-86, Cys-75–Cys-109, and Cys-89–Cys-145.

The protein resides in the secreted. It is found in the cell wall. The polypeptide is Pathogenesis-related protein PR-4B (Nicotiana tabacum (Common tobacco)).